A 780-amino-acid polypeptide reads, in one-letter code: ATP-dependent 6-phosphofructokinase, muscle type (780 aa).

The residue at position 2 (Thr-2) is an N-acetylthreonine. The tract at residues 2–390 (THEEHHAAKT…NWEVYKLLAH (389 aa)) is N-terminal catalytic PFK domain 1. ATP is bound by residues Gly-25, 88–89 (RC), and 118–121 (GDGS). Residue Asp-119 coordinates Mg(2+). Ser-133 bears the Phosphoserine mark. Substrate contacts are provided by residues 164 to 166 (SID), Arg-201, 208 to 210 (MGR), Glu-264, Arg-292, and 298 to 301 (HVQR). The active-site Proton acceptor is the Asp-166. Ser-377 bears the Phosphoserine mark. Residues 391–401 (VRPPVSKGGLH) are interdomain linker. The interval 402-780 (TVAVMNVGAP…SRKRSGEAAV (379 aa)) is C-terminal regulatory PFK domain 2. Residues Arg-471 and 528–532 (TVSNN) each bind beta-D-fructose 2,6-bisphosphate. Ser-530 carries O-linked (GlcNAc) serine glycosylation. Position 557 is an N6-(2-hydroxyisobutyryl)lysine (Lys-557). Beta-D-fructose 2,6-bisphosphate contacts are provided by residues Arg-566, 573 to 575 (MGG), Glu-629, Arg-655, and 661 to 664 (HMQQ). The residue at position 667 (Ser-667) is a Phosphoserine. Position 735 (Arg-735) interacts with beta-D-fructose 2,6-bisphosphate. A Phosphoserine modification is found at Ser-775.

Belongs to the phosphofructokinase type A (PFKA) family. ATP-dependent PFK group I subfamily. Eukaryotic two domain clade 'E' sub-subfamily. As to quaternary structure, homo- and heterotetramers. Phosphofructokinase (PFK) enzyme functions as a tetramer composed of different combinations of 3 types of subunits, called PFKM (M), PFKL (L) and PFKP (P). The composition of the PFK tetramer differs according to the tissue type it is present in. The kinetic and regulatory properties of the tetrameric enzyme are dependent on the subunit composition, hence can vary across tissues. Isoform 2 and isoform 3 interact (via N-terminal testis-specific region) with GSTM5. Isoform 2 and isoform 3 interact (via C-terminus) with HK1 (via N-terminal spermatogenic cell-specific region). The cofactor is Mg(2+). In terms of processing, glcNAcylation decreases enzyme activity. Isoform 1 is expressed in skeletal muscle (at protein level). Isoform 2 and isoform 3 are testis-specific and are detected in quiescent sperm (at protein level). They are first detected in the cytoplasm of round spermatids and subsequently in the flagellum of elongated spermatids extending into the seminiferous tubule lumen (at protein level). Isoform 2 is expressed at higher level than isoform 3 in testis.

The protein localises to the cytoplasm. It localises to the cell projection. The protein resides in the cilium. Its subcellular location is the flagellum. It catalyses the reaction beta-D-fructose 6-phosphate + ATP = beta-D-fructose 1,6-bisphosphate + ADP + H(+). It participates in carbohydrate degradation; glycolysis; D-glyceraldehyde 3-phosphate and glycerone phosphate from D-glucose: step 3/4. Its activity is regulated as follows. Allosterically activated by ADP, AMP, or fructose 2,6-bisphosphate, and allosterically inhibited by ATP or citrate. Its function is as follows. Catalyzes the phosphorylation of D-fructose 6-phosphate to fructose 1,6-bisphosphate by ATP, the first committing step of glycolysis. This chain is ATP-dependent 6-phosphofructokinase, muscle type (Pfkm), found in Mus musculus (Mouse).